The primary structure comprises 209 residues: MSGKKRTASSNRWMLEHFDDHYVKLAQKRGLRSRAAFKLEELQQKDQLIRPGMTVVDLGAAPGGWSQVAVKLVGDKGKVIACDILPMDPIVGVDFLQGDFREEKVLEALLTRVGADKVDVVLSDMAPNMSGSDGVDQPRAMYLVELALDMCHQVLAPNGSFAVKVFQGEGFDEYMKAVKEAFKVVKTRKPDSSRARSREVYLVATGYKL.

S-adenosyl-L-methionine contacts are provided by Gly63, Trp65, Asp83, Asp99, and Asp124. The active-site Proton acceptor is Lys164.

This sequence belongs to the class I-like SAM-binding methyltransferase superfamily. RNA methyltransferase RlmE family.

The protein localises to the cytoplasm. It carries out the reaction uridine(2552) in 23S rRNA + S-adenosyl-L-methionine = 2'-O-methyluridine(2552) in 23S rRNA + S-adenosyl-L-homocysteine + H(+). In terms of biological role, specifically methylates the uridine in position 2552 of 23S rRNA at the 2'-O position of the ribose in the fully assembled 50S ribosomal subunit. The protein is Ribosomal RNA large subunit methyltransferase E of Shewanella oneidensis (strain ATCC 700550 / JCM 31522 / CIP 106686 / LMG 19005 / NCIMB 14063 / MR-1).